The primary structure comprises 554 residues: Calcium/calmodulin-dependent protein kinase type II delta 2 chain (554 aa).

Positions 13–271 constitute a Protein kinase domain; sequence YQLFEELGKG…AAEAPKHPWI (259 aa). Residues 19-27 and Lys42 contribute to the ATP site; that span reads LGKGAFSVV. Asp135 (proton acceptor) is an active-site residue. Thr286 carries the post-translational modification Phosphothreonine. Residues Ser314 and Ser318 each carry the phosphoserine modification. Disordered regions lie at residues 324–375 and 392–413; these read PDGV…TIED and WQPS…SSVQ. Residues 330–340 show a composition bias toward polar residues; sequence NNKTNLASSPK. Thr372 is subject to Phosphothreonine.

This sequence belongs to the protein kinase superfamily. CAMK Ser/Thr protein kinase family. CaMK subfamily. In terms of assembly, CAMK2 is composed of four different chains: alpha, beta, gamma, and delta. The different isoforms assemble into homo- or heteromultimeric holoenzymes composed of 8 to 12 subunits. First detected at 18 hpf. At 24 hpf, expressed in discrete anterior locations and along either side of the midline. At 48 hpf, expression is predominantly in the forebrain, and then accumulates in the forebrain, hindbrain, and retinal epithelium at 72 hpf.

It catalyses the reaction L-seryl-[protein] + ATP = O-phospho-L-seryl-[protein] + ADP + H(+). The catalysed reaction is L-threonyl-[protein] + ATP = O-phospho-L-threonyl-[protein] + ADP + H(+). With respect to regulation, autophosphorylation of CAMK2 plays an important role in the regulation of the kinase activity. CaM-kinase II (CAMK2) is a prominent kinase in the central nervous system. This chain is Calcium/calmodulin-dependent protein kinase type II delta 2 chain (camk2d2), found in Danio rerio (Zebrafish).